A 370-amino-acid polypeptide reads, in one-letter code: Cytochrome b (370 aa).

4 helical membrane passes run 25-45 (FGSM…FLAV), 69-90 (WMMQ…YIHI), 105-125 (WLSG…GYVL), and 170-190 (FFAL…LHVM). Heme b-binding residues include His75 and His89. Heme b is bound by residues His174 and His188. His193 provides a ligand contact to a ubiquinone. The next 4 membrane-spanning stretches (helical) occupy residues 218 to 238 (YKDL…ISFY), 280 to 300 (LGGA…PFTH), 312 to 332 (FMQL…WTAT), and 339 to 358 (FTMI…ISNP).

It belongs to the cytochrome b family. As to quaternary structure, the cytochrome bc1 complex contains 3 respiratory subunits (MT-CYB, CYC1 and UQCRFS1), 2 core proteins (UQCRC1 and UQCRC2) and probably 6 low-molecular weight proteins. Heme b is required as a cofactor.

The protein resides in the mitochondrion inner membrane. Its function is as follows. Component of the ubiquinol-cytochrome c reductase complex (complex III or cytochrome b-c1 complex) that is part of the mitochondrial respiratory chain. The b-c1 complex mediates electron transfer from ubiquinol to cytochrome c. Contributes to the generation of a proton gradient across the mitochondrial membrane that is then used for ATP synthesis. The sequence is that of Cytochrome b (MT-CYB) from Corallus hortulanus enydris (Garden tree boa).